The primary structure comprises 487 residues: (S)-N-methylcoclaurine 3'-hydroxylase isozyme 1 (487 aa).

The chain crosses the membrane as a helical span at residues 4-24 (TVALIAVIISSILYLLFGGSG). Cys-429 provides a ligand contact to heme.

This sequence belongs to the cytochrome P450 family. The cofactor is heme.

The protein resides in the endoplasmic reticulum membrane. Its subcellular location is the microsome membrane. It carries out the reaction (S)-N-methylcoclaurine + reduced [NADPH--hemoprotein reductase] + O2 = (S)-3'-hydroxy-N-methylcoclaurine + oxidized [NADPH--hemoprotein reductase] + H2O + H(+). It functions in the pathway alkaloid biosynthesis; (S)-reticuline biosynthesis; (S)-reticuline from (S)-norcoclaurine: step 3/4. In terms of biological role, 3'-hydroxylation of (S)-N-methylcoclaurine. The polypeptide is (S)-N-methylcoclaurine 3'-hydroxylase isozyme 1 (CYP80B1) (Eschscholzia californica (California poppy)).